We begin with the raw amino-acid sequence, 396 residues long: Flavohemoprotein (396 aa).

Residues 1–136 (MLDAQTIATV…LANVFINREA (136 aa)) form the Globin domain. Residue H85 coordinates heme b. Active-site charge relay system residues include Y95 and E135. The segment at 147-396 (GGWEGTRDFR…YECFGPHKVL (250 aa)) is reductase. One can recognise an FAD-binding FR-type domain in the interval 150–255 (EGTRDFRIVA…VAPAGDFFMA (106 aa)). Residues Y188 and 204–207 (RQYS) each bind FAD. 268-273 (GVGQTP) contributes to the NADP(+) binding site. 389 to 392 (CFGP) is an FAD binding site.

It belongs to the globin family. Two-domain flavohemoproteins subfamily. In the C-terminal section; belongs to the flavoprotein pyridine nucleotide cytochrome reductase family. It depends on heme b as a cofactor. Requires FAD as cofactor.

The catalysed reaction is 2 nitric oxide + NADPH + 2 O2 = 2 nitrate + NADP(+) + H(+). The enzyme catalyses 2 nitric oxide + NADH + 2 O2 = 2 nitrate + NAD(+) + H(+). Functionally, is involved in NO detoxification in an aerobic process, termed nitric oxide dioxygenase (NOD) reaction that utilizes O(2) and NAD(P)H to convert NO to nitrate, which protects the bacterium from various noxious nitrogen compounds. Therefore, plays a central role in the inducible response to nitrosative stress. This is Flavohemoprotein from Escherichia coli O6:H1 (strain CFT073 / ATCC 700928 / UPEC).